Consider the following 638-residue polypeptide: Chaperone protein DnaK (638 aa).

Residue T198 is modified to Phosphothreonine; by autocatalysis. The segment covering 603-618 (QQAQAQQAQGADADAQ) has biased composition (low complexity). The tract at residues 603 to 638 (QQAQAQQAQGADADAQQSKEDDVVDAEFEEVKDDKK) is disordered. The span at 624-638 (DVVDAEFEEVKDDKK) shows a compositional bias: acidic residues.

The protein belongs to the heat shock protein 70 family.

Acts as a chaperone. This is Chaperone protein DnaK from Vibrio campbellii (strain ATCC BAA-1116).